The sequence spans 146 residues: MKLHELKPAEGSRKVRNRVGRGIGSGNGKTAGKGHKGQNARSGGGVRLGFEGGQTPLFRRLPKRGFTNINRKEFTIVNLSTLNRFEDGTEVTPELLLETGVISKLNDGVKILASGAVEKKLTVKAHKFSSSAKEAIEAAGGSVEVI.

The span at 1 to 13 (MKLHELKPAEGSR) shows a compositional bias: basic and acidic residues. The tract at residues 1–51 (MKLHELKPAEGSRKVRNRVGRGIGSGNGKTAGKGHKGQNARSGGGVRLGFE) is disordered. 2 stretches are compositionally biased toward gly residues: residues 21–31 (RGIGSGNGKTA) and 42–51 (SGGGVRLGFE).

It belongs to the universal ribosomal protein uL15 family. As to quaternary structure, part of the 50S ribosomal subunit.

Its function is as follows. Binds to the 23S rRNA. The polypeptide is Large ribosomal subunit protein uL15 (Bacillus cereus (strain G9842)).